We begin with the raw amino-acid sequence, 1323 residues long: Tetratricopeptide repeat protein 21 homolog (1323 aa).

TPR repeat units lie at residues Val56–Ser89, Glu411–Met444, Ser580–Glu613, His667–Phe700, Leu702–Pro735, Gly736–Asp768, Gln770–Lys802, Met804–Pro835, Ile845–Ile878, Ala892–Asp925, Lys927–Asn959, Glu961–His993, His995–Cys1027, Ala1031–Val1064, Glu1203–Ser1236, Arg1238–Lys1270, and Cys1272–Tyr1305.

The protein belongs to the TTC21 family.

In Caenorhabditis briggsae, this protein is Tetratricopeptide repeat protein 21 homolog.